A 253-amino-acid chain; its full sequence is Tabinhibitin 3 (253 aa).

The N-terminal stretch at 1–22 is a signal peptide; that stretch reads MTLKRIFCAALALIVLQSVASA. The 144-residue stretch at 66–209 folds into the SCP domain; sequence LQKTNWLRGV…LKRALFTCNF (144 aa). The Cell attachment site motif lies at 222–224; that stretch reads RGD.

The protein belongs to the CRISP family. As to expression, expressed in salivary glands.

Its subcellular location is the secreted. Its function is as follows. Inhibits platelet aggregation induced by all agonists tested (ADP, arachidonic acid, the thromboxane A2 analog U46619, thrombin, and snake venom snaclecs (TMVA that activates platelet through GPIB, and stejnulxin that specifically acts through GPVI (GP6))). May act by competing with fibrinogen for binding to glycoprotein IIb/IIIa (ITGA2B/ITGB3). The chain is Tabinhibitin 3 from Tabanus yao (Horsefly).